The following is a 328-amino-acid chain: tRNA uridine(34) hydroxylase (328 aa).

Positions leucine 130–glutamate 224 constitute a Rhodanese domain. Catalysis depends on cysteine 184, which acts as the Cysteine persulfide intermediate.

The protein belongs to the TrhO family.

The catalysed reaction is uridine(34) in tRNA + AH2 + O2 = 5-hydroxyuridine(34) in tRNA + A + H2O. In terms of biological role, catalyzes oxygen-dependent 5-hydroxyuridine (ho5U) modification at position 34 in tRNAs. This Streptococcus gordonii (strain Challis / ATCC 35105 / BCRC 15272 / CH1 / DL1 / V288) protein is tRNA uridine(34) hydroxylase.